The primary structure comprises 503 residues: UDP-N-acetylmuramate--L-alanine ligase (503 aa).

The segment at 1-22 (MIKQTHVSNSSNNSTNSTAAQV) is disordered. Low complexity predominate over residues 8–18 (SNSSNNSTNST). 135–141 (GTHGKTT) contributes to the ATP binding site.

It belongs to the MurCDEF family.

The protein localises to the cytoplasm. It carries out the reaction UDP-N-acetyl-alpha-D-muramate + L-alanine + ATP = UDP-N-acetyl-alpha-D-muramoyl-L-alanine + ADP + phosphate + H(+). It functions in the pathway cell wall biogenesis; peptidoglycan biosynthesis. Cell wall formation. The protein is UDP-N-acetylmuramate--L-alanine ligase of Colwellia psychrerythraea (strain 34H / ATCC BAA-681) (Vibrio psychroerythus).